Reading from the N-terminus, the 529-residue chain is DEP domain-containing protein 1B (529 aa).

The DEP domain occupies 24-108; the sequence is FRARMPLRRH…DNRHLYRFPP (85 aa). Residue Ser-160 is modified to Phosphoserine. A Rho-GAP domain is found at 201–393; the sequence is DSLEEVLNTK…FLMDNYQEIL (193 aa). Phosphoserine is present on Ser-436.

In Mus musculus (Mouse), this protein is DEP domain-containing protein 1B (Depdc1b).